Reading from the N-terminus, the 683-residue chain is Phenoloxidase 3 (683 aa).

Residues 1–48 (MADKKNLLLLFDHPTEPVFMDKGGNGTVFDVPDSYVTDRYNQMCKKVQ) constitute a propeptide that is removed on maturation. Cu cation-binding residues include His209, His213, and His239. Glu351 functions as the Proton acceptor in the catalytic mechanism. A glycan (N-linked (GlcNAc...) asparagine) is linked at Asn358. 3 residues coordinate Cu cation: His366, His370, and His406. N-linked (GlcNAc...) asparagine glycans are attached at residues Asn492 and Asn546. 2 disulfide bridges follow: Cys574/Cys617 and Cys576/Cys624.

It belongs to the tyrosinase family. Cu(2+) serves as cofactor. Upon activation, a trypsin type protease cleaves prophenol oxidase to yield the active enzyme.

Its subcellular location is the secreted. It catalyses the reaction 2 L-dopa + O2 = 2 L-dopaquinone + 2 H2O. The enzyme catalyses L-tyrosine + O2 = L-dopaquinone + H2O. Its function is as follows. This is a copper-containing oxidase that functions in the formation of pigments such as melanins and other polyphenolic compounds. Catalyzes the rate-limiting conversions of tyrosine to DOPA, DOPA to DOPA-quinone and possibly 5,6 dihydroxyindole to indole-5'6 quinone. This Drosophila melanogaster (Fruit fly) protein is Phenoloxidase 3 (PPO3).